A 711-amino-acid polypeptide reads, in one-letter code: K(+)-insensitive pyrophosphate-energized proton pump (711 aa).

5 helical membrane-spanning segments follow: residues L7–F27, I58–L78, A85–L105, L145–L165, and I179–I199. K202 provides a ligand contact to substrate. Residues D205, D209, and D235 each contribute to the Mg(2+) site. A run of 6 helical transmembrane segments spans residues T251–W271, I274–F294, G311–L331, Y343–L363, L403–I423, and L431–M451. Position 459 (D459) interacts with Mg(2+). Helical transmembrane passes span Y495 to V515, E535 to I555, E602 to G622, and E624 to L644. The Ca(2+) site is built by D652, D678, and D682. K685 is a substrate binding site. A helical transmembrane segment spans residues P690 to F710.

The protein belongs to the H(+)-translocating pyrophosphatase (TC 3.A.10) family. K(+)-insensitive subfamily. In terms of assembly, homodimer. Requires Mg(2+) as cofactor.

It localises to the cell membrane. It carries out the reaction diphosphate + H2O + H(+)(in) = 2 phosphate + 2 H(+)(out). Functionally, proton pump that utilizes the energy of pyrophosphate hydrolysis as the driving force for proton movement across the membrane. Generates a proton motive force. The polypeptide is K(+)-insensitive pyrophosphate-energized proton pump (Caldanaerobacter subterraneus subsp. tengcongensis (strain DSM 15242 / JCM 11007 / NBRC 100824 / MB4) (Thermoanaerobacter tengcongensis)).